The primary structure comprises 268 residues: Helix-loop-helix protein 25 (268 aa).

Polar residues predominate over residues 1–23 (MPKVIQSSMSDYRSVPYNQTPKS). The interval 1–29 (MPKVIQSSMSDYRSVPYNQTPKSASERKR) is disordered. The tract at residues 92-105 (ERRKVKTEREKIRR) is basic motif. A bHLH domain is found at 92-149 (ERRKVKTEREKIRRKKQDDCYAELKFFILNKQMGSYEQRLKLERITILEIIIDYIKHN). The tract at residues 106–149 (KKQDDCYAELKFFILNKQMGSYEQRLKLERITILEIIIDYIKHN) is helix-loop-helix motif.

It localises to the nucleus. In terms of biological role, probable transcription factor. Modulates lifespan and also recovery from the developmentally arrested larval state known as dauer, perhaps acting upstream of phosphatase PTEN/daf-18. Regulates expression of genes involved in cell division, cell-cycle regulation, and sexual reproduction, including daf-18. In Caenorhabditis elegans, this protein is Helix-loop-helix protein 25.